Reading from the N-terminus, the 280-residue chain is MNKRELESAIVTDFSKRMSYGDYLCLDQLLDCQHPLSNPQHHDEMLFVVQHQTSELWMKLMLHELQAARILVQQDKLSHCFKILARVKQIQRLLFEQWAVLETLTPSEYVEFRDVLGNSSGFQSHQYRSIEFLLGNKNAAMLAVFSNDADKHAALKAILEAPSLYDEYLLYLSRHGLPIPQECIERDWTQPYQRNPDLLPAFKEIYDHPQKYWEAYEMAEKLVDIEESFHLWRFRHMKTVERIIGFKTGTGGSSGVSFLKKALELTFFPELLDVRTEIGA.

Residues 47-51 (FVVQH), Tyr-109, and Arg-113 each bind substrate. His-236 lines the heme pocket. Residue Thr-250 participates in substrate binding.

This sequence belongs to the tryptophan 2,3-dioxygenase family. As to quaternary structure, homotetramer. It depends on heme as a cofactor.

The catalysed reaction is L-tryptophan + O2 = N-formyl-L-kynurenine. It participates in amino-acid degradation; L-tryptophan degradation via kynurenine pathway; L-kynurenine from L-tryptophan: step 1/2. Its function is as follows. Heme-dependent dioxygenase that catalyzes the oxidative cleavage of the L-tryptophan (L-Trp) pyrrole ring and converts L-tryptophan to N-formyl-L-kynurenine. Catalyzes the oxidative cleavage of the indole moiety. The sequence is that of Tryptophan 2,3-dioxygenase from Serratia proteamaculans (strain 568).